A 212-amino-acid chain; its full sequence is ATP-dependent dethiobiotin synthetase BioD (212 aa).

Residue 13–18 coordinates ATP; it reads GIGKTV. Threonine 17 contributes to the Mg(2+) binding site. The active site involves lysine 33. Substrate is bound at residue serine 37. Position 100 (glutamate 100) interacts with Mg(2+). Residues 100–103 and 184–186 contribute to the ATP site; these read EGAG and PRL.

The protein belongs to the dethiobiotin synthetase family. In terms of assembly, homodimer. Mg(2+) is required as a cofactor.

It localises to the cytoplasm. It carries out the reaction (7R,8S)-7,8-diammoniononanoate + CO2 + ATP = (4R,5S)-dethiobiotin + ADP + phosphate + 3 H(+). It participates in cofactor biosynthesis; biotin biosynthesis; biotin from 7,8-diaminononanoate: step 1/2. In terms of biological role, catalyzes a mechanistically unusual reaction, the ATP-dependent insertion of CO2 between the N7 and N8 nitrogen atoms of 7,8-diaminopelargonic acid (DAPA, also called 7,8-diammoniononanoate) to form a ureido ring. This Brucella anthropi (strain ATCC 49188 / DSM 6882 / CCUG 24695 / JCM 21032 / LMG 3331 / NBRC 15819 / NCTC 12168 / Alc 37) (Ochrobactrum anthropi) protein is ATP-dependent dethiobiotin synthetase BioD.